The following is a 448-amino-acid chain: Homogentisate 1,2-dioxygenase (448 aa).

Positions 340, 346, and 377 each coordinate Fe cation.

Belongs to the homogentisate dioxygenase family. Fe cation is required as a cofactor.

The enzyme catalyses homogentisate + O2 = 4-maleylacetoacetate + H(+). It participates in amino-acid degradation; L-phenylalanine degradation; acetoacetate and fumarate from L-phenylalanine: step 4/6. In Emericella nidulans (strain FGSC A4 / ATCC 38163 / CBS 112.46 / NRRL 194 / M139) (Aspergillus nidulans), this protein is Homogentisate 1,2-dioxygenase (hmgA).